We begin with the raw amino-acid sequence, 127 residues long: EPQRPAPGHPPPAGAVCLTGAQKPAACRCSRQDPKNRVNCGFPGITSDQCFTSGCCFDSQVPGVPWCFKPLPAQESEECVMEVSARKNCGYPGISPEDCARRNCCFSDTIPEVPWCFFPMSVEDCHY.

Positions 1-21 are cleaved as a signal peptide; that stretch reads EPQRPAPGHPPPAGAVCLTGA. The residue at position 22 (glutamine 22) is a Pyrrolidone carboxylic acid. P-type domains follow at residues 27–71 and 77–120; these read CRCS…FKPL and EECV…FFPM. 7 disulfides stabilise this stretch: cysteine 27–cysteine 125, cysteine 29–cysteine 56, cysteine 40–cysteine 55, cysteine 50–cysteine 67, cysteine 79–cysteine 105, cysteine 89–cysteine 104, and cysteine 99–cysteine 116.

As to expression, found in pancreas.

It localises to the secreted. In terms of biological role, inhibits gastrointestinal motility and gastric acid secretion. Could function as a structural component of gastric mucus, possibly by stabilizing glycoproteins in the mucus gel through interactions with carbohydrate side chains. The polypeptide is Trefoil factor 2 (TFF2) (Sus scrofa (Pig)).